Reading from the N-terminus, the 142-residue chain is Large ribosomal subunit protein uL13 (142 aa).

This sequence belongs to the universal ribosomal protein uL13 family. In terms of assembly, part of the 50S ribosomal subunit.

This protein is one of the early assembly proteins of the 50S ribosomal subunit, although it is not seen to bind rRNA by itself. It is important during the early stages of 50S assembly. This is Large ribosomal subunit protein uL13 from Stenotrophomonas maltophilia (strain R551-3).